Reading from the N-terminus, the 308-residue chain is Ribosomal RNA small subunit methyltransferase H (308 aa).

S-adenosyl-L-methionine-binding positions include 38–40 (GGH), Asp-58, Phe-82, Asp-99, and Gln-106.

Belongs to the methyltransferase superfamily. RsmH family.

It is found in the cytoplasm. It catalyses the reaction cytidine(1402) in 16S rRNA + S-adenosyl-L-methionine = N(4)-methylcytidine(1402) in 16S rRNA + S-adenosyl-L-homocysteine + H(+). Functionally, specifically methylates the N4 position of cytidine in position 1402 (C1402) of 16S rRNA. This is Ribosomal RNA small subunit methyltransferase H from Acidovorax ebreus (strain TPSY) (Diaphorobacter sp. (strain TPSY)).